Consider the following 324-residue polypeptide: Formimidoylglutamase (324 aa).

6 residues coordinate Mn(2+): histidine 124, aspartate 153, histidine 155, aspartate 157, aspartate 245, and aspartate 247.

Belongs to the arginase family. It depends on Mn(2+) as a cofactor.

It carries out the reaction N-formimidoyl-L-glutamate + H2O = formamide + L-glutamate. It functions in the pathway amino-acid degradation; L-histidine degradation into L-glutamate; L-glutamate from N-formimidoyl-L-glutamate (hydrolase route): step 1/1. Catalyzes the conversion of N-formimidoyl-L-glutamate to L-glutamate and formamide. The protein is Formimidoylglutamase of Hahella chejuensis (strain KCTC 2396).